A 348-amino-acid polypeptide reads, in one-letter code: Dihydroorotase (348 aa).

Residues His17 and His19 each coordinate Zn(2+). Substrate-binding positions include 19 to 21 (HLR) and Asn45. Positions 103, 140, and 178 each coordinate Zn(2+). Lys103 carries the N6-carboxylysine modification. Position 140 (His140) interacts with substrate. Leu223 contributes to the substrate binding site. Asp251 is a Zn(2+) binding site. Asp251 is a catalytic residue. Substrate is bound by residues His255 and Ala267.

The protein belongs to the metallo-dependent hydrolases superfamily. DHOase family. Class II DHOase subfamily. In terms of assembly, homodimer. The cofactor is Zn(2+).

The catalysed reaction is (S)-dihydroorotate + H2O = N-carbamoyl-L-aspartate + H(+). Its pathway is pyrimidine metabolism; UMP biosynthesis via de novo pathway; (S)-dihydroorotate from bicarbonate: step 3/3. Catalyzes the reversible cyclization of carbamoyl aspartate to dihydroorotate. The polypeptide is Dihydroorotase (Escherichia coli O6:K15:H31 (strain 536 / UPEC)).